The sequence spans 233 residues: Ribosomal RNA-processing protein 14-C (233 aa).

Residues Asp-32–Lys-65 adopt a coiled-coil conformation. A compositionally biased stretch (basic and acidic residues) spans Arg-47–Ser-64. Disordered regions lie at residues Arg-47–Lys-87, Lys-130–Lys-149, and Asp-164–Lys-233. A Phosphoserine modification is found at Ser-75. The stretch at Ala-122 to Ala-223 forms a coiled coil. 2 stretches are compositionally biased toward basic and acidic residues: residues Ile-133–Lys-149 and Lys-180–Leu-209. Residues Lys-210 to Lys-233 show a composition bias toward basic residues.

Belongs to the SURF6 family. Component of the 90S and 60S pre-ribosomal particles.

The protein localises to the nucleus. Its subcellular location is the nucleolus. Its function is as follows. Involved in ribosome biogenesis and cell polarity. Required for the synthesis of both 40S and 60S ribosomal subunits and may also play some direct role in correct positioning of the mitotic spindle during mitosis. The protein is Ribosomal RNA-processing protein 14-C (rrp14c) of Schizosaccharomyces pombe (strain 972 / ATCC 24843) (Fission yeast).